Reading from the N-terminus, the 74-residue chain is U3-agatoxin-Ao1h (74 aa).

The signal sequence occupies residues 1–20 (MRAIISLLLISTMVFGVIEA). Positions 21–34 (VSVQKSLKIFEGER) are excised as a propeptide. 4 cysteine pairs are disulfide-bonded: cysteine 37-cysteine 53, cysteine 44-cysteine 58, cysteine 52-cysteine 68, and cysteine 60-cysteine 66. Residue asparagine 72 is modified to Asparagine amide.

It belongs to the neurotoxin 07 (Beta/delta-agtx) family. 03 (aga-4) subfamily. Aga sub-subfamily. Expressed by the venom gland.

The protein resides in the secreted. In terms of biological role, insecticidal neurotoxin that induces an irreversible spastic paralysis when injected into insects. Modifies presynaptic voltage-gated sodium channels (Nav), causing them to open at the normal resting potential of the nerve. This leads to spontaneous release of neurotransmitter and repetitive action potentials in motor neurons. The polypeptide is U3-agatoxin-Ao1h (Agelena orientalis (Funnel-web spider)).